A 300-amino-acid polypeptide reads, in one-letter code: Peroxisomal 2,4-dienoyl-CoA reductase [(3E)-enoyl-CoA-producing] (300 aa).

Residues 42 to 47 (GGGSGI), 67 to 71 (RNLEK), and Asp-93 contribute to the NADP(+) site. A substrate-binding site is contributed by Arg-67. Substrate contacts are provided by residues Arg-95, Phe-125, and 133 to 135 (SFN). NADP(+) contacts are provided by residues Lys-189 and 215-221 (PGPISGT). Arg-226 is a binding site for substrate. The Microbody targeting signal motif lies at 298-300 (AKL).

The protein belongs to the short-chain dehydrogenases/reductases (SDR) family. 2,4-dienoyl-CoA reductase subfamily. As to quaternary structure, monomer, dimer and oligomer.

The protein resides in the peroxisome. The enzyme catalyses a (2E,4Z)-dienoyl-CoA + NADPH + H(+) = a 4,5-saturated-(3E)-enoyl-CoA + NADP(+). It catalyses the reaction a (2E,4E)-dienoyl-CoA + NADPH + H(+) = a 4,5-saturated-(3E)-enoyl-CoA + NADP(+). It carries out the reaction (2E,4E)-hexadienoyl-CoA + NADPH + H(+) = (3E)-hexenoyl-CoA + NADP(+). The catalysed reaction is (2E,4E)-decadienoyl-CoA + NADPH + H(+) = (3E)-decenoyl-CoA + NADP(+). The enzyme catalyses (2E,4Z,7Z,10Z,13Z,16Z,19Z)-docosaheptaenoyl-CoA + NADPH + H(+) = (3E,7Z,10Z,13Z,16Z,19Z)-docosahexaenoyl-CoA + NADP(+). Auxiliary enzyme of beta-oxidation. Participates in the degradation of unsaturated fatty enoyl-CoA esters having double bonds in both even- and odd-numbered positions in peroxisome. Catalyzes the NADP-dependent reduction of 2,4-dienoyl-CoA to yield trans-3-enoyl-CoA. This Danio rerio (Zebrafish) protein is Peroxisomal 2,4-dienoyl-CoA reductase [(3E)-enoyl-CoA-producing] (decr2).